Reading from the N-terminus, the 255-residue chain is Imidazole glycerol phosphate synthase subunit HisF (255 aa).

Catalysis depends on residues aspartate 12 and aspartate 131.

This sequence belongs to the HisA/HisF family. As to quaternary structure, heterodimer of HisH and HisF.

The protein localises to the cytoplasm. The enzyme catalyses 5-[(5-phospho-1-deoxy-D-ribulos-1-ylimino)methylamino]-1-(5-phospho-beta-D-ribosyl)imidazole-4-carboxamide + L-glutamine = D-erythro-1-(imidazol-4-yl)glycerol 3-phosphate + 5-amino-1-(5-phospho-beta-D-ribosyl)imidazole-4-carboxamide + L-glutamate + H(+). Its pathway is amino-acid biosynthesis; L-histidine biosynthesis; L-histidine from 5-phospho-alpha-D-ribose 1-diphosphate: step 5/9. In terms of biological role, IGPS catalyzes the conversion of PRFAR and glutamine to IGP, AICAR and glutamate. The HisF subunit catalyzes the cyclization activity that produces IGP and AICAR from PRFAR using the ammonia provided by the HisH subunit. The polypeptide is Imidazole glycerol phosphate synthase subunit HisF (Vesicomyosocius okutanii subsp. Calyptogena okutanii (strain HA)).